Consider the following 317-residue polypeptide: Transaldolase (317 aa).

Catalysis depends on lysine 126, which acts as the Schiff-base intermediate with substrate.

This sequence belongs to the transaldolase family. Type 1 subfamily. As to quaternary structure, homodimer.

It localises to the cytoplasm. The catalysed reaction is D-sedoheptulose 7-phosphate + D-glyceraldehyde 3-phosphate = D-erythrose 4-phosphate + beta-D-fructose 6-phosphate. The protein operates within carbohydrate degradation; pentose phosphate pathway; D-glyceraldehyde 3-phosphate and beta-D-fructose 6-phosphate from D-ribose 5-phosphate and D-xylulose 5-phosphate (non-oxidative stage): step 2/3. Its function is as follows. Transaldolase is important for the balance of metabolites in the pentose-phosphate pathway. The chain is Transaldolase from Burkholderia lata (strain ATCC 17760 / DSM 23089 / LMG 22485 / NCIMB 9086 / R18194 / 383).